A 354-amino-acid polypeptide reads, in one-letter code: Protein NDH-DEPENDENT CYCLIC ELECTRON FLOW 5 (354 aa).

Residues 1–49 (MALVHYMNVSRSTFPLSRSSKINLSSSFASLPLQFHKNIKRLESSVPPS) constitute a chloroplast transit peptide.

It localises to the plastid. It is found in the chloroplast thylakoid membrane. Its function is as follows. Required for both formation and activity of the chloroplast NAD(P)H dehydrogenase (NDH) complex of the photosynthetic electron transport chain. May function in assembly or stabilization of the NDH complex. This is Protein NDH-DEPENDENT CYCLIC ELECTRON FLOW 5 from Arabidopsis thaliana (Mouse-ear cress).